The following is a 155-amino-acid chain: Ribosomal RNA large subunit methyltransferase H (155 aa).

Residues leucine 73, glycine 104, and 123 to 128 each bind S-adenosyl-L-methionine; that span reads LSALTL.

It belongs to the RNA methyltransferase RlmH family. In terms of assembly, homodimer.

It localises to the cytoplasm. It carries out the reaction pseudouridine(1915) in 23S rRNA + S-adenosyl-L-methionine = N(3)-methylpseudouridine(1915) in 23S rRNA + S-adenosyl-L-homocysteine + H(+). In terms of biological role, specifically methylates the pseudouridine at position 1915 (m3Psi1915) in 23S rRNA. This Coxiella burnetii (strain Dugway 5J108-111) protein is Ribosomal RNA large subunit methyltransferase H.